The primary structure comprises 443 residues: Anamorsin homolog (443 aa).

An N-terminal SAM-like domain region spans residues 136 to 301; sequence LSSAPRVLVL…AAGVADALSG (166 aa). A linker region spans residues 302–331; it reads NRGALPNGTAQTDGDDFIDESTLIDPTESY. Positions 341, 348, 351, and 353 each coordinate [2Fe-2S] cluster. Positions 341 to 353 are fe-S binding site A; the sequence is CASRPKACPNCTC. The [4Fe-4S] cluster site is built by Cys-380, Cys-383, Cys-391, and Cys-394. Short sequence motifs (cx2C motif) lie at residues 380-383 and 391-394; these read CGNC and CAGC. Residues 380–394 are fe-S binding site B; it reads CGNCYLGDAFRCAGC.

This sequence belongs to the anamorsin family. Monomer. [2Fe-2S] cluster serves as cofactor. The cofactor is [4Fe-4S] cluster.

It is found in the cytoplasm. The protein localises to the mitochondrion intermembrane space. Functionally, component of the cytosolic iron-sulfur (Fe-S) protein assembly (CIA) machinery. Required for the maturation of extramitochondrial Fe-S proteins. Part of an electron transfer chain functioning in an early step of cytosolic Fe-S biogenesis, facilitating the de novo assembly of a [4Fe-4S] cluster on the cytosolic Fe-S scaffold complex. Electrons are transferred from NADPH via a FAD- and FMN-containing diflavin oxidoreductase. Together with the diflavin oxidoreductase, also required for the assembly of the diferric tyrosyl radical cofactor of ribonucleotide reductase (RNR), probably by providing electrons for reduction during radical cofactor maturation in the catalytic small subunit. This Toxoplasma gondii (strain ATCC 50861 / VEG) protein is Anamorsin homolog.